Reading from the N-terminus, the 361-residue chain is Ankyrin repeat domain-containing protein 16 (361 aa).

ANK repeat units lie at residues 36-66 (AGDTLLHCAARHGRQDILAYLVEAWSMDIEA), 70-99 (DYKRPLHEAASMGHRDCVRYLLGRGAVVDS), 103-132 (ADWTPLMMACTRKNLDVIQDLVEHGANPLL), 136-165 (DGWNSFHIASREGHPVILRYLLTVCPDAWK), 170-200 (IRRTPLHTAAMHGCLEAVQVLLERCHYEPDC), 204-233 (CGVTPFMDAIQCGHVSIAKLLLEQHKACSS), 238-268 (MGAQALHRAAVTGQDEAIRFLVCGLGIDVDV), 273-302 (SQLTALHYAAKEGQTNTVQTLLSLGADINS), and 306-335 (RNRSVLHLACAGQHVACTRLLLQSGLKDSE).

In terms of assembly, interacts with AARS; the interaction is direct. In terms of tissue distribution, widely expressed in brain (at protein level).

The protein localises to the cytoplasm. It is found in the nucleus. In terms of biological role, required to prevent the misactivation of serine (Ser) with tRNA(Ala) by promoting the hydrolysis of Ser-mischarged tRNA(Ala), thereby playing a role in translational fidelity. Binds directly to the catalytic domain of AARS/AlaRS and captures Ser that is misactivated by AARS/AlaRS, preventing the charging of Ser adenylates to tRNA(Ala) and precluding Ser misincorporation in nascent peptides. The chain is Ankyrin repeat domain-containing protein 16 from Mus musculus (Mouse).